Reading from the N-terminus, the 188-residue chain is dCTP deaminase (188 aa).

107–112 contacts dCTP; that stretch reads KSTYAR. E133 acts as the Proton donor/acceptor in catalysis. 3 residues coordinate dCTP: Q152, Y166, and Q176.

It belongs to the dCTP deaminase family. In terms of assembly, homotrimer.

The catalysed reaction is dCTP + H2O + H(+) = dUTP + NH4(+). Its pathway is pyrimidine metabolism; dUMP biosynthesis; dUMP from dCTP (dUTP route): step 1/2. Functionally, catalyzes the deamination of dCTP to dUTP. The polypeptide is dCTP deaminase (Sulfurovum sp. (strain NBC37-1)).